Here is a 226-residue protein sequence, read N- to C-terminus: Thioredoxin domain-containing protein 9 (226 aa).

The region spanning 52–180 (LEALKKAQQQ…TTETLEWRLG (129 aa)) is the Thioredoxin domain. Ser188, Ser221, and Ser223 each carry phosphoserine.

Forms ternary complexes with the chaperonin TCP1 complex, spanning the cylindrical chaperonin cavity and contacting at least 2 subunits.

Its subcellular location is the cytoplasm. The protein resides in the nucleus. It localises to the cytoskeleton. It is found in the microtubule organizing center. The protein localises to the centrosome. Its subcellular location is the midbody. In terms of biological role, significantly diminishes the chaperonin TCP1 complex ATPase activity, thus negatively impacts protein folding, including that of actin or tubulin. In Bos taurus (Bovine), this protein is Thioredoxin domain-containing protein 9 (TXNDC9).